Reading from the N-terminus, the 313-residue chain is MKWSEISIHTTAEATEAVSSLLYELGANGVVIEDPEVLYREWDTPFGEIYQLSPDDFPAEGVFVKAYLPVDSSELLDVVEELKEQLAQLIEYGLDIGKASIAVNDVHEDEWAHAWKKYYKPVHVSDRMTIKPVWEEYVPKHPDEIIIEMDPGMAFGTGTHPTTILCLRALEKYMAKGDQVYDVGTGTAILSIAAIKLGAKDVLAMDLDEVAVRSAQANTELNGVHEHINVRQNNLLDGIEEQVEVVVANILAEVIVRFTDDVFRVLKPGGTFISSGIIAAREADVKAALVASGLEIVETIFIDDWVAIVAKKR.

Residues threonine 163, glycine 184, aspartate 206, and asparagine 249 each coordinate S-adenosyl-L-methionine.

The protein belongs to the methyltransferase superfamily. PrmA family.

It localises to the cytoplasm. The catalysed reaction is L-lysyl-[protein] + 3 S-adenosyl-L-methionine = N(6),N(6),N(6)-trimethyl-L-lysyl-[protein] + 3 S-adenosyl-L-homocysteine + 3 H(+). Methylates ribosomal protein L11. In Brevibacillus brevis (strain 47 / JCM 6285 / NBRC 100599), this protein is Ribosomal protein L11 methyltransferase.